The following is a 449-amino-acid chain: C4-dicarboxylate transport protein (449 aa).

Helical transmembrane passes span 20–42, 62–84, 91–113, 164–181, 202–224, 239–261, 344–366, and 370–389; these read YLQL…HCYP, IISP…VGTV, AMVY…AHVV, ILQV…LALA, LVQM…TIGK, SFYL…FSGF, LALF…AGFI, and ATLT…ILGV.

This sequence belongs to the dicarboxylate/amino acid:cation symporter (DAACS) (TC 2.A.23) family.

It is found in the cell inner membrane. Responsible for the transport of dicarboxylates such as succinate, fumarate, and malate from the periplasm across the inner membrane. The protein is C4-dicarboxylate transport protein (dctA) of Xylella fastidiosa (strain 9a5c).